Consider the following 262-residue polypeptide: Type III pantothenate kinase (262 aa).

9-16 (DAGNSRIK) lines the ATP pocket. Substrate is bound by residues Tyr-96 and 103–106 (GSDR). Asp-105 acts as the Proton acceptor in catalysis. Thr-129 provides a ligand contact to ATP. Thr-189 contributes to the substrate binding site.

It belongs to the type III pantothenate kinase family. Homodimer. The cofactor is NH4(+). Requires K(+) as cofactor.

It is found in the cytoplasm. It catalyses the reaction (R)-pantothenate + ATP = (R)-4'-phosphopantothenate + ADP + H(+). It functions in the pathway cofactor biosynthesis; coenzyme A biosynthesis; CoA from (R)-pantothenate: step 1/5. In terms of biological role, catalyzes the phosphorylation of pantothenate (Pan), the first step in CoA biosynthesis. The polypeptide is Type III pantothenate kinase (Burkholderia vietnamiensis (strain G4 / LMG 22486) (Burkholderia cepacia (strain R1808))).